The chain runs to 134 residues: MHCLECGLVYIVSGLKVPEKISVRVFVNRIEHPFTHWVKLNAGELLREDEEIILDKVKTGYGSPFVITSLQIGVRRVPSALAEELDTIWARPLNEITFAKRRKIRQKHPMSFENITSTAGTSTASEYLEVVDES.

A C4-type; atypical zinc finger spans residues 3-36; sequence CLECGLVYIVSGLKVPEKISVRVFVNRIEHPFTH.

In terms of assembly, interacts with the general archaeal transcription factors TBPs.

Functionally, involved in nitrogen regulation. Enhances the transcription of the nitrogen fixation (nif) operon under nitrogen-limited conditions. Acts by binding to the nifH promoter region. The protein is Nif-regulating protein A of Methanosarcina mazei (strain ATCC BAA-159 / DSM 3647 / Goe1 / Go1 / JCM 11833 / OCM 88) (Methanosarcina frisia).